Consider the following 344-residue polypeptide: Dihydroorotase (344 aa).

The Zn(2+) site is built by His13 and His15. Substrate-binding positions include 15-17 (HLR) and Asn41. Positions 99, 136, and 174 each coordinate Zn(2+). Lys99 is modified (N6-carboxylysine). Residue His136 coordinates substrate. Residue Leu219 coordinates substrate. Position 247 (Asp247) interacts with Zn(2+). Residue Asp247 is part of the active site. 2 residues coordinate substrate: His251 and Ala263.

The protein belongs to the metallo-dependent hydrolases superfamily. DHOase family. Class II DHOase subfamily. In terms of assembly, homodimer. Zn(2+) is required as a cofactor.

The enzyme catalyses (S)-dihydroorotate + H2O = N-carbamoyl-L-aspartate + H(+). Its pathway is pyrimidine metabolism; UMP biosynthesis via de novo pathway; (S)-dihydroorotate from bicarbonate: step 3/3. In terms of biological role, catalyzes the reversible cyclization of carbamoyl aspartate to dihydroorotate. This chain is Dihydroorotase, found in Shewanella denitrificans (strain OS217 / ATCC BAA-1090 / DSM 15013).